The following is a 250-amino-acid chain: GTP cyclohydrolase 1 type 2 homolog (250 aa).

His63, His64, Asp100, His218, and Glu222 together coordinate a divalent metal cation.

Belongs to the GTP cyclohydrolase I type 2/NIF3 family. In terms of assembly, homohexamer.

This Pyrococcus abyssi (strain GE5 / Orsay) protein is GTP cyclohydrolase 1 type 2 homolog.